A 125-amino-acid chain; its full sequence is Large ribosomal subunit protein bL12 (125 aa).

Residues 95–125 (APKPIKEGVDKKTAEEAKKKLEEAGAKAELK) form a disordered region.

The protein belongs to the bacterial ribosomal protein bL12 family. Homodimer. Part of the ribosomal stalk of the 50S ribosomal subunit. Forms a multimeric L10(L12)X complex, where L10 forms an elongated spine to which 2 to 4 L12 dimers bind in a sequential fashion. Binds GTP-bound translation factors.

Functionally, forms part of the ribosomal stalk which helps the ribosome interact with GTP-bound translation factors. Is thus essential for accurate translation. The sequence is that of Large ribosomal subunit protein bL12 from Polynucleobacter necessarius subsp. necessarius (strain STIR1).